Here is a 145-residue protein sequence, read N- to C-terminus: MKVLIQRVTQAAVDVDSITIGQIDAGILALVGVEKQDNRETLGRMAQKLLKYRIFPDSEGKMNLSLTDTGGGLLVVSQFTLAADTRKGLRPSFSSSAPPDLARSLFDEFVAALRAQHPNVETGRFGADMKVRLINDGPVTFMLES.

The Gly-cisPro motif, important for rejection of L-amino acids motif lies at 137–138 (GP).

The protein belongs to the DTD family. Homodimer.

The protein resides in the cytoplasm. It catalyses the reaction glycyl-tRNA(Ala) + H2O = tRNA(Ala) + glycine + H(+). The catalysed reaction is a D-aminoacyl-tRNA + H2O = a tRNA + a D-alpha-amino acid + H(+). Functionally, an aminoacyl-tRNA editing enzyme that deacylates mischarged D-aminoacyl-tRNAs. Also deacylates mischarged glycyl-tRNA(Ala), protecting cells against glycine mischarging by AlaRS. Acts via tRNA-based rather than protein-based catalysis; rejects L-amino acids rather than detecting D-amino acids in the active site. By recycling D-aminoacyl-tRNA to D-amino acids and free tRNA molecules, this enzyme counteracts the toxicity associated with the formation of D-aminoacyl-tRNA entities in vivo and helps enforce protein L-homochirality. This Teredinibacter turnerae (strain ATCC 39867 / T7901) protein is D-aminoacyl-tRNA deacylase.